Reading from the N-terminus, the 124-residue chain is MLGSSTRSMFFLLVCIGLLADNRYNVSAMRHREFFLKETQAEKAGVQTEEISKLRSIGVQFKHTLEDQEMLNKNRRVLEEVNKDKIKAEETQERKNKTEDSFKSSKRRVRRGSDPIHNKAQPFS.

Residues 1-20 (MLGSSTRSMFFLLVCIGLLA) form the signal peptide. N-linked (GlcNAc...) asparagine glycans are attached at residues Asn-25 and Asn-96. Positions 71–109 (LNKNRRVLEEVNKDKIKAEETQERKNKTEDSFKSSKRRV) form a coiled coil. The span at 87 to 103 (KAEETQERKNKTEDSFK) shows a compositional bias: basic and acidic residues. The interval 87–124 (KAEETQERKNKTEDSFKSSKRRVRRGSDPIHNKAQPFS) is disordered.

This sequence belongs to the CLV3/ESR signal peptide family. Binds to SKM1 present in the pollen grain, particularly under relatively high temperature (at 30 degrees Celsius). Interacts with BAM3, especially in roots. Expressed at low levels in flowers, especially in pistils. Present in vascular tissues. In roots, confined to protophloem and sieve element precursor cells.

Its subcellular location is the secreted. The protein localises to the extracellular space. Extracellular signal peptide that regulates cell fate. Represses root apical meristem maintenance. Represses protophloem differentiation in a BAM3-dependent manner. BRX, BAM3, and CLE45 act together to regulate the transition of protophloem cells from proliferation to differentiation, thus impinging on postembryonic growth capacity of the root meristem; this signaling pathway requires CRN and CLV2 and involves MAKR5 for its transduction/amplification. Triggers the accumulation of MAKR5 in developing sieve elements in a BAM3-dependent manner. Prevents, in a dose-dependent manner, auxin response in the root meristem thus leading in the repression of protophloem differentiation and periclinal sieve element precursor cell division. Promotes pollen tube growth prolongation in a SKM1 and SKM2-dependent manner, especially under relatively high temperature (at 30 degrees Celsius), thus conferring tolerance against high temperature probably through the maintenance of mitochondrial activity. Alleviates mitochondrial decay pollen tube in vitro culture. The polypeptide is CLAVATA3/ESR (CLE)-related protein 45 (Arabidopsis thaliana (Mouse-ear cress)).